The chain runs to 88 residues: Large ribosomal subunit protein bL27 (88 aa).

The segment at 1-24 (MAHKKGTGSTRNGRDSNSKRLGVK) is disordered.

The protein belongs to the bacterial ribosomal protein bL27 family.

The sequence is that of Large ribosomal subunit protein bL27 from Prochlorococcus marinus (strain MIT 9313).